The sequence spans 147 residues: Molybdopterin synthase catalytic subunit 1 (147 aa).

Substrate contacts are provided by residues 43–45 (NVR), 109–110 (HR), Lys-125, and 132–134 (KKE).

Belongs to the MoaE family. As to quaternary structure, heterotetramer of 2 MoaD subunits and 2 MoaE subunits. Also stable as homodimer. The enzyme changes between these two forms during catalysis.

The enzyme catalyses 2 [molybdopterin-synthase sulfur-carrier protein]-C-terminal-Gly-aminoethanethioate + cyclic pyranopterin phosphate + H2O = molybdopterin + 2 [molybdopterin-synthase sulfur-carrier protein]-C-terminal Gly-Gly + 2 H(+). It participates in cofactor biosynthesis; molybdopterin biosynthesis. Functionally, converts molybdopterin precursor Z into molybdopterin. This requires the incorporation of two sulfur atoms into precursor Z to generate a dithiolene group. The sulfur is provided by MoaD. In Mycobacterium tuberculosis (strain ATCC 25618 / H37Rv), this protein is Molybdopterin synthase catalytic subunit 1 (moaE1).